We begin with the raw amino-acid sequence, 547 residues long: Glucose-6-phosphate isomerase (547 aa).

Glu352 serves as the catalytic Proton donor. Catalysis depends on residues His383 and Lys511.

It belongs to the GPI family.

Its subcellular location is the cytoplasm. The enzyme catalyses alpha-D-glucose 6-phosphate = beta-D-fructose 6-phosphate. It participates in carbohydrate biosynthesis; gluconeogenesis. Its pathway is carbohydrate degradation; glycolysis; D-glyceraldehyde 3-phosphate and glycerone phosphate from D-glucose: step 2/4. Its function is as follows. Catalyzes the reversible isomerization of glucose-6-phosphate to fructose-6-phosphate. The protein is Glucose-6-phosphate isomerase of Rhodospirillum rubrum (strain ATCC 11170 / ATH 1.1.1 / DSM 467 / LMG 4362 / NCIMB 8255 / S1).